The following is a 380-amino-acid chain: Cytochrome b (380 aa).

4 helical membrane-spanning segments follow: residues 33–53 (FGSL…FLAM), 77–98 (WLIR…YMHI), 113–133 (WNIG…GYVL), and 178–198 (FFAF…LHLL). 2 residues coordinate heme b: His83 and His97. 2 residues coordinate heme b: His182 and His196. Residue His201 coordinates a ubiquinone. 4 helical membrane passes run 226–246 (YKDL…ALFA), 288–308 (LGGV…PILH), 320–340 (LTQF…WIGG), and 347–367 (FIII…VLSP).

The protein belongs to the cytochrome b family. As to quaternary structure, the cytochrome bc1 complex contains 3 respiratory subunits (MT-CYB, CYC1 and UQCRFS1), 2 core proteins (UQCRC1 and UQCRC2) and probably 6 low-molecular weight proteins. Heme b serves as cofactor.

The protein localises to the mitochondrion inner membrane. Its function is as follows. Component of the ubiquinol-cytochrome c reductase complex (complex III or cytochrome b-c1 complex) that is part of the mitochondrial respiratory chain. The b-c1 complex mediates electron transfer from ubiquinol to cytochrome c. Contributes to the generation of a proton gradient across the mitochondrial membrane that is then used for ATP synthesis. The polypeptide is Cytochrome b (mt-cyb) (Oncorhynchus keta (Chum salmon)).